The chain runs to 210 residues: Na(+)-translocating NADH-quinone reductase subunit D (210 aa).

Helical transmembrane passes span 14–34 (PIINNNPIALQILGVCSALAV), 42–62 (LVMTIALTAVTAFSNLFISLI), 72–92 (IIVQMTIIASLVIVVDQVLQA), 96–116 (AISKQLSVFVGLIITNCIVMG), 131–151 (FMDGIGNGLGYGAILLSVGVV), and 178–198 (NGLLLLPPSAFFLIGGLIWLI).

It belongs to the NqrDE/RnfAE family. Composed of six subunits; NqrA, NqrB, NqrC, NqrD, NqrE and NqrF.

The protein resides in the cell inner membrane. It catalyses the reaction a ubiquinone + n Na(+)(in) + NADH + H(+) = a ubiquinol + n Na(+)(out) + NAD(+). Functionally, NQR complex catalyzes the reduction of ubiquinone-1 to ubiquinol by two successive reactions, coupled with the transport of Na(+) ions from the cytoplasm to the periplasm. NqrA to NqrE are probably involved in the second step, the conversion of ubisemiquinone to ubiquinol. In Shewanella frigidimarina (strain NCIMB 400), this protein is Na(+)-translocating NADH-quinone reductase subunit D.